Reading from the N-terminus, the 681-residue chain is tRNA wybutosine-synthesizing protein 4 (681 aa).

Residues 1 to 11 show a composition bias toward basic residues; it reads MSNKNQRKTKS. Positions 1–21 are disordered; sequence MSNKNQRKTKSKDREVRKTND. Residues Arg66, Gly92, Asp119, 165 to 166, and Glu193 each bind S-adenosyl-L-methionine; that span reads NL.

The protein belongs to the methyltransferase superfamily. LCMT family.

It catalyses the reaction 7-[(3S)-3-amino-3-carboxypropyl]wyosine(37) in tRNA(Phe) + S-adenosyl-L-methionine = 7-[(3S)-(3-amino-3-methoxycarbonyl)propyl]wyosine(37) in tRNA(Phe) + S-adenosyl-L-homocysteine. The catalysed reaction is 7-[(3S)-(3-amino-3-methoxycarbonyl)propyl]wyosine(37) in tRNA(Phe) + S-adenosyl-L-methionine + CO2 = wybutosine(37) in tRNA(Phe) + S-adenosyl-L-homocysteine + 2 H(+). The protein operates within tRNA modification; wybutosine-tRNA(Phe) biosynthesis. Probable S-adenosyl-L-methionine-dependent methyltransferase that acts as a component of the wybutosine biosynthesis pathway. Wybutosine is a hyper modified guanosine with a tricyclic base found at the 3'-position adjacent to the anticodon of eukaryotic phenylalanine tRNA. May methylate the carboxyl group of leucine residues to form alpha-leucine ester residues. The sequence is that of tRNA wybutosine-synthesizing protein 4 (ppm2) from Schizosaccharomyces pombe (strain 972 / ATCC 24843) (Fission yeast).